The primary structure comprises 144 residues: Nucleoside diphosphate kinase (144 aa).

ATP-binding residues include Lys11, Phe59, Arg87, Thr93, Arg104, and Asn114. The active-site Pros-phosphohistidine intermediate is the His117.

Belongs to the NDK family. In terms of assembly, homotetramer. The cofactor is Mg(2+).

The protein localises to the cytoplasm. The enzyme catalyses a 2'-deoxyribonucleoside 5'-diphosphate + ATP = a 2'-deoxyribonucleoside 5'-triphosphate + ADP. The catalysed reaction is a ribonucleoside 5'-diphosphate + ATP = a ribonucleoside 5'-triphosphate + ADP. In terms of biological role, major role in the synthesis of nucleoside triphosphates other than ATP. The ATP gamma phosphate is transferred to the NDP beta phosphate via a ping-pong mechanism, using a phosphorylated active-site intermediate. This Aliivibrio salmonicida (strain LFI1238) (Vibrio salmonicida (strain LFI1238)) protein is Nucleoside diphosphate kinase.